A 432-amino-acid chain; its full sequence is Glutamate-1-semialdehyde 2,1-aminomutase (432 aa).

At Lys272 the chain carries N6-(pyridoxal phosphate)lysine.

This sequence belongs to the class-III pyridoxal-phosphate-dependent aminotransferase family. HemL subfamily. As to quaternary structure, homodimer. Requires pyridoxal 5'-phosphate as cofactor.

The protein resides in the cytoplasm. It carries out the reaction (S)-4-amino-5-oxopentanoate = 5-aminolevulinate. Its pathway is porphyrin-containing compound metabolism; protoporphyrin-IX biosynthesis; 5-aminolevulinate from L-glutamyl-tRNA(Glu): step 2/2. It functions in the pathway porphyrin-containing compound metabolism; chlorophyll biosynthesis. The protein is Glutamate-1-semialdehyde 2,1-aminomutase of Nostoc punctiforme (strain ATCC 29133 / PCC 73102).